The primary structure comprises 291 residues: Protein US2 (291 aa).

Gly-2 is subject to N-acetylglycine; by host. The disordered stretch occupies residues 223 to 281; that stretch reads NKPRPASSRPHPATHPTQRPCFTCMGRPEIPDEPSWQTGDDDPQNPGPPLAVGDEWPPS.

Belongs to the herpesviridae HHV-1 US2 protein family. As to quaternary structure, interacts with host KRT18. Interacts with host MAP3K7; this interaction induces host NF-kappa-B pathway.

The protein localises to the virion. It localises to the host cytoplasm. The protein resides in the host cell surface. It is found in the host nucleus. Plays a role in the activation of the host NF-kappa-B pathway by interacting with and thus activating the component MAP3K7. This Human herpesvirus 2 (strain HG52) (HHV-2) protein is Protein US2.